Consider the following 24-residue polypeptide: N-acyl-L-amino acid amidohydrolase (24 aa).

The protein belongs to the peptidase M20 family. In terms of assembly, homotetramer. The cofactor is Co(2+).

It catalyses the reaction an N-acyl-L-amino acid + H2O = an L-alpha-amino acid + a carboxylate. It carries out the reaction an N-acetyl-L-cysteine-S-conjugate + H2O = an S-substituted L-cysteine + acetate. This chain is N-acyl-L-amino acid amidohydrolase, found in Parageobacillus thermoglucosidasius (Geobacillus thermoglucosidasius).